The sequence spans 372 residues: Aryl-hydrocarbon-interacting protein-like 1 (372 aa).

One can recognise a PPIase FKBP-type domain in the interval 53 to 145 (REVGQPMHII…DLDELQKEPQ (93 aa)). TPR repeat units lie at residues 178 to 211 (VPVLHGEGNRLFKLGRYEEASSKYQEAIICLRNL), 230 to 263 (NTLILNYCQCLLKKEEYYEVLEHTSDILRHHPGI), and 264 to 297 (VKAYYVRARAHAEVWNEAEAKADLQKVLELEPSM). The tract at residues 325-372 (NMLSQGATWSPAEPPAEPPAESSTEPPAEPPAEPPAELTLTPGHPLQH) is disordered.

In terms of assembly, interacts with NUB1.

It is found in the cytoplasm. Its subcellular location is the nucleus. In terms of biological role, may be important in protein trafficking and/or protein folding and stabilization. This chain is Aryl-hydrocarbon-interacting protein-like 1 (AIPL1), found in Saimiri boliviensis boliviensis (Bolivian squirrel monkey).